A 498-amino-acid chain; its full sequence is Tryptophan decarboxylase TDC2 (498 aa).

Lys316 is modified (N6-(pyridoxal phosphate)lysine).

The protein belongs to the group II decarboxylase family. Requires pyridoxal 5'-phosphate as cofactor.

It catalyses the reaction L-tryptophan + H(+) = tryptamine + CO2. Its function is as follows. Involved in the biosynthesis of tryptamine. Supplies tryptamine for the indole moiety of camptothecin (CPT), an anti-cancer monoterpene alkaloid. Represents a key step in monoterpene indole alkaloid biosynthesis. Is specific for tryptophan, and inactive against tyrosine, phenylalanine and 3,4-dihydroxyphenylalanine (dopa). The polypeptide is Tryptophan decarboxylase TDC2 (Camptotheca acuminata (Happy tree)).